A 296-amino-acid polypeptide reads, in one-letter code: 4-diphosphocytidyl-2-C-methyl-D-erythritol kinase (296 aa).

Lysine 11 is a catalytic residue. 95–105 (PVAAGMAGGSS) is an ATP binding site. Residue aspartate 137 is part of the active site.

This sequence belongs to the GHMP kinase family. IspE subfamily.

The enzyme catalyses 4-CDP-2-C-methyl-D-erythritol + ATP = 4-CDP-2-C-methyl-D-erythritol 2-phosphate + ADP + H(+). Its pathway is isoprenoid biosynthesis; isopentenyl diphosphate biosynthesis via DXP pathway; isopentenyl diphosphate from 1-deoxy-D-xylulose 5-phosphate: step 3/6. Functionally, catalyzes the phosphorylation of the position 2 hydroxy group of 4-diphosphocytidyl-2C-methyl-D-erythritol. In Clostridioides difficile (strain 630) (Peptoclostridium difficile), this protein is 4-diphosphocytidyl-2-C-methyl-D-erythritol kinase.